Here is a 314-residue protein sequence, read N- to C-terminus: Protein EXORDIUM (314 aa).

The first 21 residues, 1–21 (MYLLVFKLFLFLSLLQISVSA), serve as a signal peptide directing secretion.

This sequence belongs to the EXORDIUM family. In terms of tissue distribution, expressed in root tips, vascular tissue of roots, shoot apex, rosette leaves and embryos.

The protein localises to the secreted. The protein resides in the extracellular space. Its subcellular location is the apoplast. In terms of biological role, required for cell expansion in leaves. May mediate brassinosteroid (BR)-induced leaf growth. May play a role in the control of BR responses in roots. May be involved in signaling processes that coordinate BR responses with environmental or developmental signals. This chain is Protein EXORDIUM (EXO), found in Arabidopsis thaliana (Mouse-ear cress).